The primary structure comprises 54 residues: MPQLEFTWWIINFFIVWTADFTLLIVLSIPNLSTPTTLSKQLDINKSHVTWQWS.

The helical transmembrane segment at 9-29 (WIINFFIVWTADFTLLIVLSI) threads the bilayer.

It belongs to the ATPase protein 8 family. In terms of assembly, F-type ATPases have 2 components, CF(1) - the catalytic core - and CF(0) - the membrane proton channel.

The protein resides in the mitochondrion membrane. Mitochondrial membrane ATP synthase (F(1)F(0) ATP synthase or Complex V) produces ATP from ADP in the presence of a proton gradient across the membrane which is generated by electron transport complexes of the respiratory chain. F-type ATPases consist of two structural domains, F(1) - containing the extramembraneous catalytic core and F(0) - containing the membrane proton channel, linked together by a central stalk and a peripheral stalk. During catalysis, ATP synthesis in the catalytic domain of F(1) is coupled via a rotary mechanism of the central stalk subunits to proton translocation. Part of the complex F(0) domain. Minor subunit located with subunit a in the membrane. In Arbacia lixula (Black urchin), this protein is ATP synthase protein 8 (MT-ATP8).